Consider the following 245-residue polypeptide: Large ribosomal subunit protein uL2 (245 aa).

The disordered stretch occupies residues 198–245; the sequence is VSHPHGGGSHKRPGKPTTVARTAPPGQKVGHIAARKTGRAKRRAATKR. Residues 230-245 show a composition bias toward basic residues; the sequence is AARKTGRAKRRAATKR.

The protein belongs to the universal ribosomal protein uL2 family. As to quaternary structure, part of the 50S ribosomal subunit. Forms a bridge to the 30S subunit in the 70S ribosome.

Its function is as follows. One of the primary rRNA binding proteins. Required for association of the 30S and 50S subunits to form the 70S ribosome, for tRNA binding and peptide bond formation. It has been suggested to have peptidyltransferase activity; this is somewhat controversial. Makes several contacts with the 16S rRNA in the 70S ribosome. The protein is Large ribosomal subunit protein uL2 of Korarchaeum cryptofilum (strain OPF8).